Here is a 150-residue protein sequence, read N- to C-terminus: Cilia- and flagella-associated protein 68 (150 aa).

Mn stretches follow at residues 99-110 (TTYDTSYNNKMP) and 140-150 (KSTYMNSYSKP).

It belongs to the CFAP68 family. Microtubule inner protein component of sperm flagellar doublet microtubules.

The protein localises to the cytoplasm. The protein resides in the cytoskeleton. It is found in the cilium axoneme. Its subcellular location is the flagellum axoneme. It localises to the nucleus. The protein localises to the cell projection. The protein resides in the cilium. In terms of biological role, microtubule inner protein (MIP) part of the dynein-decorated doublet microtubules (DMTs) in cilia axoneme, which is required for motile cilia beating. This Homo sapiens (Human) protein is Cilia- and flagella-associated protein 68.